The following is a 71-amino-acid chain: Dermonecrotic toxin LgSicTox-alphaI-Loxn-A (71 aa).

H12 is a catalytic residue. 3 residues coordinate Mg(2+): E32, D34, and D48.

Mg(2+) is required as a cofactor. Post-translationally, contains 2 disulfide bonds. In terms of tissue distribution, expressed by the venom gland.

It localises to the secreted. The catalysed reaction is an N-(acyl)-sphingosylphosphocholine = an N-(acyl)-sphingosyl-1,3-cyclic phosphate + choline. It carries out the reaction an N-(acyl)-sphingosylphosphoethanolamine = an N-(acyl)-sphingosyl-1,3-cyclic phosphate + ethanolamine. It catalyses the reaction a 1-acyl-sn-glycero-3-phosphocholine = a 1-acyl-sn-glycero-2,3-cyclic phosphate + choline. The enzyme catalyses a 1-acyl-sn-glycero-3-phosphoethanolamine = a 1-acyl-sn-glycero-2,3-cyclic phosphate + ethanolamine. Functionally, catalyzes the hydrolysis of sphingomyelin. May also act on other phosphatidyl esters. In terms of biological role, dermonecrotic toxins cleave the phosphodiester linkage between the phosphate and headgroup of certain phospholipids (sphingolipid and lysolipid substrates), forming an alcohol (often choline) and a cyclic phosphate. This toxin acts on sphingomyelin (SM). It may also act on ceramide phosphoethanolamine (CPE), lysophosphatidylcholine (LPC) and lysophosphatidylethanolamine (LPE), but not on lysophosphatidylserine (LPS), and lysophosphatidylglycerol (LPG). It acts by transphosphatidylation, releasing exclusively cyclic phosphate products as second products. In vivo, induces dermonecrosis, but is not lethal. Induces hemolysis, vascular permeability, edema, inflammatory response, and platelet aggregation. This is Dermonecrotic toxin LgSicTox-alphaI-Loxn-A from Loxosceles gaucho (Spider).